The sequence spans 1214 residues: BOS complex subunit NOMO1 (1214 aa).

The signal sequence occupies residues 1–23 (MRAGRCAAALLLLLLSGAGRAIG). Topologically, residues 24 to 1150 (SEDIVVGCGG…RKLPEQDIAQ (1127 aa)) are extracellular. 3 N-linked (GlcNAc...) asparagine glycosylation sites follow: N42, N210, and N610. Residues 692–720 (KSAQELRREQQLAEIETRRQEREKNGKEE) are a coiled coil. The span at 708–726 (TRRQEREKNGKEEGEEGRA) shows a compositional bias: basic and acidic residues. Positions 708–733 (TRRQEREKNGKEEGEEGRARPPGQEM) are disordered. The helical transmembrane segment at 1151–1167 (GSYIALPLTLLLLLAGY) threads the bilayer. Residues 1168-1214 (NHDKLIPLLLQLTSRLQGVRALGQAASDSSGPEDMKRQTKKQKTRRT) are Cytoplasmic-facing. The disordered stretch occupies residues 1190-1214 (GQAASDSSGPEDMKRQTKKQKTRRT). A phosphoserine mark is found at S1196 and S1197. The segment covering 1205 to 1214 (QTKKQKTRRT) has biased composition (basic residues).

In terms of assembly, component of the back of Sec61 (BOS) complex, composed of NCLN/Nicalin, NOMO (NOMO1, NOMO2 or NOMO3) and TMEM147. The BOS complex is part of the multi-pass translocon (MPT) complex, composed of three subcomplexes, the GEL complex (composed of RAB5IF/OPTI and TMCO1), the BOS complex (composed of NCLN/Nicalin, NOMO and TMEM147) and the PAT complex (composed of WDR83OS/Asterix and CCDC47). The MPT complex associates with the SEC61 complex.

It localises to the endoplasmic reticulum membrane. Component of the multi-pass translocon (MPT) complex that mediates insertion of multi-pass membrane proteins into the lipid bilayer of membranes. The MPT complex takes over after the SEC61 complex: following membrane insertion of the first few transmembrane segments of proteins by the SEC61 complex, the MPT complex occludes the lateral gate of the SEC61 complex to promote insertion of subsequent transmembrane regions. The polypeptide is BOS complex subunit NOMO1 (Mus musculus (Mouse)).